We begin with the raw amino-acid sequence, 276 residues long: Sulfur carrier protein FdhD (276 aa).

Cysteine 120 acts as the Cysteine persulfide intermediate in catalysis.

The protein belongs to the FdhD family.

It is found in the cytoplasm. Functionally, required for formate dehydrogenase (FDH) activity. Acts as a sulfur carrier protein that transfers sulfur from IscS to the molybdenum cofactor prior to its insertion into FDH. The protein is Sulfur carrier protein FdhD of Bordetella bronchiseptica (strain ATCC BAA-588 / NCTC 13252 / RB50) (Alcaligenes bronchisepticus).